The primary structure comprises 481 residues: Aspartyl/glutamyl-tRNA(Asn/Gln) amidotransferase subunit B (481 aa).

Belongs to the GatB/GatE family. GatB subfamily. As to quaternary structure, heterotrimer of A, B and C subunits.

It catalyses the reaction L-glutamyl-tRNA(Gln) + L-glutamine + ATP + H2O = L-glutaminyl-tRNA(Gln) + L-glutamate + ADP + phosphate + H(+). The catalysed reaction is L-aspartyl-tRNA(Asn) + L-glutamine + ATP + H2O = L-asparaginyl-tRNA(Asn) + L-glutamate + ADP + phosphate + 2 H(+). Its function is as follows. Allows the formation of correctly charged Asn-tRNA(Asn) or Gln-tRNA(Gln) through the transamidation of misacylated Asp-tRNA(Asn) or Glu-tRNA(Gln) in organisms which lack either or both of asparaginyl-tRNA or glutaminyl-tRNA synthetases. The reaction takes place in the presence of glutamine and ATP through an activated phospho-Asp-tRNA(Asn) or phospho-Glu-tRNA(Gln). This chain is Aspartyl/glutamyl-tRNA(Asn/Gln) amidotransferase subunit B, found in Pseudomonas fluorescens (strain ATCC BAA-477 / NRRL B-23932 / Pf-5).